The following is a 453-amino-acid chain: Verruculogen prenyltransferase (453 aa).

Substrate is bound at residue E89. Dimethylallyl diphosphate contacts are provided by R102, K194, Y196, K273, Y275, Y378, Y443, and Y447.

It belongs to the tryptophan dimethylallyltransferase family.

It catalyses the reaction verruculogen + dimethylallyl diphosphate = fumitremorgin A + diphosphate. The protein operates within mycotoxin biosynthesis. Functionally, verruculogen prenyltransferase; part of the gene cluster that mediates the biosynthesis of fumitremorgins, indole alkaloids that carry not only intriguing chemical structures, but also interesting biological and pharmacological activities. The biosynthesis of fumitremorgin-type alkaloids begins by condensation of the two amino acids L-tryptophan and L-proline to brevianamide F, catalyzed by the non-ribosomal peptide synthetase ftmPS/ftmA. Brevianamide F is then prenylated by the prenyltransferase ftmPT1/ftmB in the presence of dimethylallyl diphosphate, resulting in the formation of tryprostatin B. The three cytochrome P450 monooxygenases, ftmP450-1/ftmC, ftmP450-2/ftmE and ftmP450-3/FtmG, are responsible for the conversion of tryprostatin B to 6-hydroxytryprostatin B, tryprostatin A to fumitremorgin C and fumitremorgin C to 12,13-dihydroxyfumitremorgin C, respectively. The putative methyltransferase ftmMT/ftmD is expected for the conversion of 6-hydroxytryprostatin B to tryprostatin A. FtmPT2/FtmH catalyzes the prenylation of 12,13-dihydroxyfumitre-morgin C in the presence of dimethylallyl diphosphate, resulting in the formation of fumitremorgin B. Fumitremorgin B is further converted to verruculogen by ftmOx1/ftmF via the insertion of an endoperoxide bond between the two prenyl moieties. Finally, verruculogen is further converted to fumitremorgin A by the verruculogen prenyltransferase ftmPT3. This is Verruculogen prenyltransferase from Neosartorya fischeri (strain ATCC 1020 / DSM 3700 / CBS 544.65 / FGSC A1164 / JCM 1740 / NRRL 181 / WB 181) (Aspergillus fischerianus).